Here is a 323-residue protein sequence, read N- to C-terminus: Ferrochelatase (323 aa).

His-196 and Glu-277 together coordinate Fe cation.

This sequence belongs to the ferrochelatase family.

The protein localises to the cytoplasm. The catalysed reaction is heme b + 2 H(+) = protoporphyrin IX + Fe(2+). It participates in porphyrin-containing compound metabolism; protoheme biosynthesis; protoheme from protoporphyrin-IX: step 1/1. Catalyzes the ferrous insertion into protoporphyrin IX. The protein is Ferrochelatase of Haemophilus influenzae (strain PittEE).